A 417-amino-acid polypeptide reads, in one-letter code: Serine hydroxymethyltransferase (417 aa).

An N6-acetyllysine modification is found at Lys54. Residues Leu121 and 125–127 (GHL) contribute to the (6S)-5,6,7,8-tetrahydrofolate site. Lys229 is subject to N6-(pyridoxal phosphate)lysine. Residues Lys250, Lys285, and Lys354 each carry the N6-acetyllysine modification. Residue 355 to 357 (SPF) participates in (6S)-5,6,7,8-tetrahydrofolate binding. The residue at position 375 (Lys375) is an N6-acetyllysine.

The protein belongs to the SHMT family. As to quaternary structure, homodimer. Requires pyridoxal 5'-phosphate as cofactor.

It localises to the cytoplasm. It carries out the reaction (6R)-5,10-methylene-5,6,7,8-tetrahydrofolate + glycine + H2O = (6S)-5,6,7,8-tetrahydrofolate + L-serine. Its pathway is one-carbon metabolism; tetrahydrofolate interconversion. It functions in the pathway amino-acid biosynthesis; glycine biosynthesis; glycine from L-serine: step 1/1. Functionally, catalyzes the reversible interconversion of serine and glycine with tetrahydrofolate (THF) serving as the one-carbon carrier. This reaction serves as the major source of one-carbon groups required for the biosynthesis of purines, thymidylate, methionine, and other important biomolecules. Also exhibits THF-independent aldolase activity toward beta-hydroxyamino acids, producing glycine and aldehydes, via a retro-aldol mechanism. The polypeptide is Serine hydroxymethyltransferase (Shigella dysenteriae serotype 1 (strain Sd197)).